Consider the following 459-residue polypeptide: Endoglucanase EG-1 (459 aa).

Residues 1–22 form the signal peptide; the sequence is MAPSVTLPLTTAILAIARLVAA. At Gln23 the chain carries Pyrrolidone carboxylic acid. The catalytic stretch occupies residues 23–397; it reads QQPGTSTPEV…DIGSTTNSTA (375 aa). Cystine bridges form between Cys41–Cys47, Cys71–Cys92, Cys82–Cys88, Cys161–Cys360, Cys193–Cys216, Cys197–Cys215, Cys236–Cys241, and Cys246–Cys315. Residue Asn78 is glycosylated (N-linked (GlcNAc) asparagine). N-linked (GlcNAc...) (high mannose) asparagine glycosylation occurs at Asn204. Glu218 acts as the Nucleophile in catalysis. Residue Glu223 is the Proton donor/acceptor of the active site. The disordered stretch occupies residues 390–425; sequence GSTTNSTAPPPPPASSTTFSTTRRSSTTSSSPSCTQ. N-linked (GlcNAc...) asparagine glycosylation occurs at Asn394. The linker stretch occupies residues 398–423; sequence PPPPPASSTTFSTTRRSSTTSSSPSC. Positions 404 to 425 are enriched in low complexity; that stretch reads SSTTFSTTRRSSTTSSSPSCTQ. 3 cysteine pairs are disulfide-bonded: Cys423-Cys439, Cys431-Cys448, and Cys442-Cys458. The region spanning 423–459 is the CBM1 domain; it reads CTQTHWGQCGGIGYSGCKTCTSGTTCQYSNDYYSQCL.

The protein belongs to the glycosyl hydrolase 7 (cellulase C) family. Post-translationally, asn-204 contains mainly a high-mannose-type glycan (Hex(7-9)GlcNAc(2)), with a small fraction (8%) bearing a single GlcNAc at this site.

Its subcellular location is the secreted. The enzyme catalyses Endohydrolysis of (1-&gt;4)-beta-D-glucosidic linkages in cellulose, lichenin and cereal beta-D-glucans.. Endoglucanase (EG) that cleaves the internal beta-1,4-glucosidic bonds in cellulose. The degradation of cellulose involves an interplay between different cellulolytic enzymes. Hydrolysis starts with EGs, which cut internal glycosidic linkages to reduce the polymerization degree of the substrate and creates new chain ends for exocellobiohydrolases (CBHs). The CBH release the disaccharide cellobiose from the non-reducing end of the cellulose polymer chain. Finally, beta-1,4-glucosidases hydrolyze the cellobiose and other short cello-oligosaccharides into glucose units. This is Endoglucanase EG-1 (egl1) from Hypocrea jecorina (Trichoderma reesei).